Reading from the N-terminus, the 433-residue chain is 3-phosphoshikimate 1-carboxyvinyltransferase (433 aa).

The 3-phosphoshikimate site is built by Lys21, Ser22, and Arg26. Lys21 is a phosphoenolpyruvate binding site. Residues Gly92 and Arg120 each coordinate phosphoenolpyruvate. Residues Ser166, Gln168, Asp317, and Lys344 each contribute to the 3-phosphoshikimate site. Gln168 provides a ligand contact to phosphoenolpyruvate. Asp317 functions as the Proton acceptor in the catalytic mechanism. Phosphoenolpyruvate is bound by residues Arg348 and Arg391.

This sequence belongs to the EPSP synthase family. Monomer.

It is found in the cytoplasm. The enzyme catalyses 3-phosphoshikimate + phosphoenolpyruvate = 5-O-(1-carboxyvinyl)-3-phosphoshikimate + phosphate. It participates in metabolic intermediate biosynthesis; chorismate biosynthesis; chorismate from D-erythrose 4-phosphate and phosphoenolpyruvate: step 6/7. Catalyzes the transfer of the enolpyruvyl moiety of phosphoenolpyruvate (PEP) to the 5-hydroxyl of shikimate-3-phosphate (S3P) to produce enolpyruvyl shikimate-3-phosphate and inorganic phosphate. The chain is 3-phosphoshikimate 1-carboxyvinyltransferase from Caldicellulosiruptor bescii (strain ATCC BAA-1888 / DSM 6725 / KCTC 15123 / Z-1320) (Anaerocellum thermophilum).